We begin with the raw amino-acid sequence, 152 residues long: Serglycin (152 aa).

The signal sequence occupies residues 1–25; sequence MQVPVGSRLVLALAFVLVWGSSVQG. A propeptide spans 26 to 74 (activation peptide); sequence YPARRARYQWVRCKPNGFFANCIEEKGPQFDLIDESNNIGPPMNNPVLM. Cys38 and Cys47 are disulfide-bonded. Residues 66–115 are disordered; the sequence is PPMNNPVLMEGPSKDFISNYDDYGSGSGSGSGSGSGSGSGSGSGFLGDME. 10 repeat units span residues 89 to 90, 91 to 92, 93 to 94, 95 to 96, 97 to 98, 99 to 100, 101 to 102, 103 to 104, 105 to 106, and 107 to 108. Residues 89–108 are 10 X 2 AA tandem repeats of G-S; that stretch reads GSGSGSGSGSGSGSGSGSGS. Residues 90–110 are compositionally biased toward gly residues; that stretch reads SGSGSGSGSGSGSGSGSGSGF. Residues Ser92 and Ser94 are each glycosylated (O-linked (Xyl...) (glycosaminoglycan) serine). Ser98, Ser100, Ser102, Ser104, Ser106, and Ser108 each carry an O-linked (Xyl...) (glycosaminoglycan) serine glycan.

Belongs to the serglycin family. In terms of assembly, binds to activated CD44 and to GZMB. Post-translationally, O-glycosylated; contains chondroitin sulfate and heparan sulfate.

The protein resides in the cytoplasmic granule. It localises to the cytolytic granule. It is found in the secreted. The protein localises to the extracellular space. Its subcellular location is the golgi apparatus. Its function is as follows. Plays a role in formation of mast cell secretory granules and mediates storage of various compounds in secretory vesicles. Required for storage of some proteases in both connective tissue and mucosal mast cells and for storage of granzyme B in T-lymphocytes. Plays a role in localizing neutrophil elastase in azurophil granules of neutrophils. Mediates processing of MMP2. Plays a role in cytotoxic cell granule-mediated apoptosis by forming a complex with granzyme B which is delivered to cells by perforin to induce apoptosis. Regulates the secretion of TNF-alpha and may also regulate protease secretion. Inhibits bone mineralization. This is Serglycin (Srgn) from Mus musculus (Mouse).